The chain runs to 50 residues: Ribosome-inactivating protein lyophyllin (50 aa).

It carries out the reaction Endohydrolysis of the N-glycosidic bond at one specific adenosine on the 28S rRNA.. In terms of biological role, N-glycosylase that inhibits protein synthesis by depurinating ribosomal rRNA, and thus acts as a ribosomal inactivating protein (RIP). Has adenine polynucleotide glycosidase activity on the poly(A) substrate A30-ssDNA. Inhibits cell-free translation in rabbit reticulocyte lysate system with an IC(50) of 1 nM. May function in the defense response to pathogens. Displays antifungal activity against C.comatus and P.piricola, but not against R.solani, M.arachidicola and C.gossypii. Inhibits mycelial growth in P.piricola with an IC(50) of 2.5 uM. Has cytotoxic activity against the human cancer cell lines Hela, HepG2, and JAR, with IC(50) of 358.8, 489.8, and 926.9 nM respectively. It also inhibits HIV-1 reverse transcriptase activity (IC(50)=7.9 nM) and disrupts mouse embryonic development. The chain is Ribosome-inactivating protein lyophyllin from Lyophyllum shimeji (Hon-shimeji).